Consider the following 386-residue polypeptide: DNA-directed RNA polymerase subunit Rpo1C (386 aa).

Belongs to the RNA polymerase beta' chain family. In terms of assembly, part of the RNA polymerase complex.

Its subcellular location is the cytoplasm. The enzyme catalyses RNA(n) + a ribonucleoside 5'-triphosphate = RNA(n+1) + diphosphate. Its function is as follows. DNA-dependent RNA polymerase (RNAP) catalyzes the transcription of DNA into RNA using the four ribonucleoside triphosphates as substrates. Forms part of the jaw domain. The polypeptide is DNA-directed RNA polymerase subunit Rpo1C (Methanococcus vannielii (strain ATCC 35089 / DSM 1224 / JCM 13029 / OCM 148 / SB)).